Reading from the N-terminus, the 175-residue chain is Homeobox expressed in ES cells 1 (175 aa).

Positions 1–44 (MSPNLQEGARLVEGKPSSTSFSIESILGLDQKKDDAPSMKPHRP) are disordered. The homeobox DNA-binding region spans 108–167 (GRRPRTAFTQNQVEVLENVFRVNCYPGIDIREDLARKLNLEEDRIQIWFQNRRAKLKRSH).

It belongs to the ANF homeobox family. As to quaternary structure, interacts with TLE1.

It localises to the nucleus. Required for the normal development of the forebrain, eyes and other anterior structures such as the olfactory placodes and pituitary gland. Possible transcriptional repressor. Binds to the palindromic PIII sequence, 5'-AGCTTGAGTCTAATTGAATTAACTGTAC-3'. This is Homeobox expressed in ES cells 1 (HESX1) from Oryctolagus cuniculus (Rabbit).